A 90-amino-acid chain; its full sequence is Putative beta-neurotoxin RjAa14F (90 aa).

The first 18 residues, Met1–Cys18, serve as a signal peptide directing secretion. Residues Lys19–Val89 enclose the LCN-type CS-alpha/beta domain. 4 cysteine pairs are disulfide-bonded: Cys29/Cys88, Cys33/Cys62, Cys40/Cys69, and Cys44/Cys71.

Belongs to the long (4 C-C) scorpion toxin superfamily. Sodium channel inhibitor family. Beta subfamily. Expressed by the venom gland.

The protein resides in the secreted. In terms of biological role, beta toxins bind voltage-independently at site-4 of sodium channels (Nav) and shift the voltage of activation toward more negative potentials thereby affecting sodium channel activation and promoting spontaneous and repetitive firing. The polypeptide is Putative beta-neurotoxin RjAa14F (Rhopalurus junceus (Caribbean blue scorpion)).